The sequence spans 154 residues: UPF0756 membrane protein EAT1b_0668 (154 aa).

5 consecutive transmembrane segments (helical) span residues 5–25, 52–72, 82–102, 107–127, and 129–149; these read LFLL…VIIA, WGVT…DIGF, PVGI…GQGV, VDPV…GFMK, and IPVG…GYQV.

This sequence belongs to the UPF0756 family.

It localises to the cell membrane. This Exiguobacterium sp. (strain ATCC BAA-1283 / AT1b) protein is UPF0756 membrane protein EAT1b_0668.